The following is a 506-amino-acid chain: Apolipoprotein N-acyltransferase (506 aa).

7 consecutive transmembrane segments (helical) span residues 10–30 (ANAK…AGWG), 33–53 (LALP…PLWW), 57–77 (VLAP…FYGS), 105–125 (IWLC…LLMA), 139–159 (WGVT…LWWI), 176–196 (LAGP…VTLS), and 205–225 (VGLA…SVRV). Positions 238-473 (IQGNIPTREK…FVIYAATIFR (236 aa)) constitute a CN hydrolase domain. The Proton acceptor role is filled by glutamate 279. Lysine 336 is an active-site residue. The Nucleophile role is filled by cysteine 385. The helical transmembrane segment at 483–500 (YGDWLLPLLLGMLSLSVL) threads the bilayer.

This sequence belongs to the CN hydrolase family. Apolipoprotein N-acyltransferase subfamily.

Its subcellular location is the cell inner membrane. It carries out the reaction N-terminal S-1,2-diacyl-sn-glyceryl-L-cysteinyl-[lipoprotein] + a glycerophospholipid = N-acyl-S-1,2-diacyl-sn-glyceryl-L-cysteinyl-[lipoprotein] + a 2-acyl-sn-glycero-3-phospholipid + H(+). It functions in the pathway protein modification; lipoprotein biosynthesis (N-acyl transfer). Catalyzes the phospholipid dependent N-acylation of the N-terminal cysteine of apolipoprotein, the last step in lipoprotein maturation. The polypeptide is Apolipoprotein N-acyltransferase (Thermosynechococcus vestitus (strain NIES-2133 / IAM M-273 / BP-1)).